The primary structure comprises 153 residues: Large ribosomal subunit protein bL9 (153 aa).

The protein belongs to the bacterial ribosomal protein bL9 family.

Its function is as follows. Binds to the 23S rRNA. This chain is Large ribosomal subunit protein bL9, found in Gloeobacter violaceus (strain ATCC 29082 / PCC 7421).